The following is a 329-amino-acid chain: Calponin-3 (329 aa).

Residue lysine 23 is modified to N6-acetyllysine. The 105-residue stretch at 26–130 (HQAEEDLRNW…TLVALAGLAK (105 aa)) folds into the Calponin-homology (CH) domain. Lysine 158 is modified (N6-methyllysine). Calponin-like repeat units lie at residues 164–189 (IGLQ…RHLY), 204–229 (ISLQ…RDIY), and 243–268 (ISLQ…RQVY). The disordered stretch occupies residues 279-329 (PVIHNGSQGTGTNGSEISDSDYQAEYPDEYHGEYQDDYPRDYQYSDQGIDY). The span at 306–318 (DEYHGEYQDDYPR) shows a compositional bias: basic and acidic residues. Serine 323 bears the Phosphoserine mark.

This sequence belongs to the calponin family. As to expression, expressed in both non-smooth muscle tissues as well as smooth muscle tissues.

Thin filament-associated protein that is implicated in the regulation and modulation of smooth muscle contraction. It is capable of binding to actin, calmodulin and tropomyosin. The interaction of calponin with actin inhibits the actomyosin Mg-ATPase activity. The chain is Calponin-3 (CNN3) from Homo sapiens (Human).